Consider the following 37-residue polypeptide: Large ribosomal subunit protein bL36 (37 aa).

This sequence belongs to the bacterial ribosomal protein bL36 family.

In Helicobacter pylori (strain HPAG1), this protein is Large ribosomal subunit protein bL36.